A 225-amino-acid chain; its full sequence is Endo-1,4-beta-xylanase (225 aa).

Residues 1-31 (MVGFTPVALAALAATGALAFPAGNATELEKR) form the signal peptide. Q32 carries the pyrrolidone carboxylic acid modification. Residues 32–222 (QTTPNSEGWH…SSGYARITVA (191 aa)) enclose the GH11 domain. The active-site Nucleophile is the E117. C141 and C185 are oxidised to a cystine. E209 acts as the Proton donor in catalysis.

The catalysed reaction is Endohydrolysis of (1-&gt;4)-beta-D-xylosidic linkages in xylans.. It participates in glycan degradation; xylan degradation. This Thermomyces lanuginosus (Humicola lanuginosa) protein is Endo-1,4-beta-xylanase (XYNA).